A 322-amino-acid chain; its full sequence is Ribosomal RNA small subunit methyltransferase H (322 aa).

S-adenosyl-L-methionine-binding positions include 35-37 (GGY), D52, F79, D100, and Q107. Residues 254 to 322 (GATPAGSRHL…TAPKKEGRQG (69 aa)) are disordered. Low complexity predominate over residues 295 to 309 (SRSATLRVARRTAAA).

The protein belongs to the methyltransferase superfamily. RsmH family.

The protein localises to the cytoplasm. The enzyme catalyses cytidine(1402) in 16S rRNA + S-adenosyl-L-methionine = N(4)-methylcytidine(1402) in 16S rRNA + S-adenosyl-L-homocysteine + H(+). Functionally, specifically methylates the N4 position of cytidine in position 1402 (C1402) of 16S rRNA. In Rhizorhabdus wittichii (strain DSM 6014 / CCUG 31198 / JCM 15750 / NBRC 105917 / EY 4224 / RW1) (Sphingomonas wittichii), this protein is Ribosomal RNA small subunit methyltransferase H.